A 418-amino-acid chain; its full sequence is Tyrosine--tRNA ligase (418 aa).

Tyr-34 is a binding site for L-tyrosine. Residues 39–48 (PTADSLHLGH) carry the 'HIGH' region motif. Residues Tyr-169 and Gln-173 each contribute to the L-tyrosine site. The short motif at 229–233 (KFGKS) is the 'KMSKS' region element. Lys-232 contributes to the ATP binding site. Residues 352–418 (HNIVEILVAA…GKKKYAVLTY (67 aa)) form the S4 RNA-binding domain.

This sequence belongs to the class-I aminoacyl-tRNA synthetase family. TyrS type 1 subfamily. Homodimer.

It is found in the cytoplasm. The enzyme catalyses tRNA(Tyr) + L-tyrosine + ATP = L-tyrosyl-tRNA(Tyr) + AMP + diphosphate + H(+). In terms of biological role, catalyzes the attachment of tyrosine to tRNA(Tyr) in a two-step reaction: tyrosine is first activated by ATP to form Tyr-AMP and then transferred to the acceptor end of tRNA(Tyr). This is Tyrosine--tRNA ligase from Streptococcus pyogenes serotype M1.